The following is a 67-amino-acid chain: Andropin (67 aa).

Positions 1 to 19 (MKYFLVLVVLTLILAISVG) are cleaved as a signal peptide.

It belongs to the andropin family. Ejaculatory duct of adult males.

It localises to the secreted. Functionally, male-specific peptide with moderate activity against Gram-positive bacteria. In Drosophila orena (Fruit fly), this protein is Andropin (Anp).